A 540-amino-acid polypeptide reads, in one-letter code: CTP synthase (540 aa).

An amidoligase domain region spans residues 1–265 (MVRFIFITGG…DNKVLKFFNL (265 aa)). Residue serine 13 participates in CTP binding. Residue serine 13 coordinates UTP. Residues 14–19 (SLGKGL) and aspartate 71 each bind ATP. 2 residues coordinate Mg(2+): aspartate 71 and glutamate 139. CTP is bound by residues 146 to 148 (DIE), 186 to 191 (KTKPTQ), and lysine 222. UTP contacts are provided by residues 186–191 (KTKPTQ) and lysine 222. The Glutamine amidotransferase type-1 domain occupies 290–539 (RIAIIAKYHK…VEAAIKYNKN (250 aa)). Glycine 352 is an L-glutamine binding site. Cysteine 379 serves as the catalytic Nucleophile; for glutamine hydrolysis. L-glutamine is bound by residues 380–383 (LGMQ), glutamate 403, and arginine 467. Catalysis depends on residues histidine 512 and glutamate 514.

The protein belongs to the CTP synthase family. As to quaternary structure, homotetramer.

It carries out the reaction UTP + L-glutamine + ATP + H2O = CTP + L-glutamate + ADP + phosphate + 2 H(+). The enzyme catalyses L-glutamine + H2O = L-glutamate + NH4(+). The catalysed reaction is UTP + NH4(+) + ATP = CTP + ADP + phosphate + 2 H(+). The protein operates within pyrimidine metabolism; CTP biosynthesis via de novo pathway; CTP from UDP: step 2/2. Its activity is regulated as follows. Allosterically activated by GTP, when glutamine is the substrate; GTP has no effect on the reaction when ammonia is the substrate. The allosteric effector GTP functions by stabilizing the protein conformation that binds the tetrahedral intermediate(s) formed during glutamine hydrolysis. Inhibited by the product CTP, via allosteric rather than competitive inhibition. Its function is as follows. Catalyzes the ATP-dependent amination of UTP to CTP with either L-glutamine or ammonia as the source of nitrogen. Regulates intracellular CTP levels through interactions with the four ribonucleotide triphosphates. The chain is CTP synthase from Rickettsia bellii (strain RML369-C).